The primary structure comprises 87 residues: U3-theraphotoxin-Hhn1e (87 aa).

A signal peptide spans 1–24 (MVNMKASMFLTFAGLVLLFVVCYA). Positions 25–52 (SESEEKEFPKGMLSSIFAVDNDFKQEER) are excised as a propeptide. Intrachain disulfides connect C54–C67, C61–C72, and C66–C79.

It belongs to the neurotoxin 10 (Hwtx-1) family. 51 (Hntx-8) subfamily. Hntx-8 sub-subfamily. Expressed by the venom gland.

It is found in the secreted. Functionally, ion channel inhibitor. The protein is U3-theraphotoxin-Hhn1e of Cyriopagopus hainanus (Chinese bird spider).